Here is a 503-residue protein sequence, read N- to C-terminus: Betaine aldehyde dehydrogenase 2 (503 aa).

161–170 is a betaine aldehyde binding site; the sequence is WNYPLLMATW. 238-243 provides a ligand contact to NAD(+); sequence GSYETG. Residues E260, 292 to 295, and C453 each bind betaine aldehyde; that span reads QICS. Active-site residues include E260 and C294. 4-aminobutanal-binding positions include 260–261 and C294; that span reads EL. 4-aminobutanal is bound at residue W459. Positions 501 to 503 match the Microbody targeting signal motif; the sequence is SKL.

It belongs to the aldehyde dehydrogenase family. Homodimer.

Its subcellular location is the peroxisome. It localises to the cytoplasm. It carries out the reaction betaine aldehyde + NAD(+) + H2O = glycine betaine + NADH + 2 H(+). It participates in amine and polyamine biosynthesis; betaine biosynthesis via choline pathway; betaine from betaine aldehyde: step 1/1. Its function is as follows. Dehydrogenase that can use N-acetyl-c-aminobutyraldehyde (NAGABald), gamma-guanidinobutyraldehyde (GGBald), betaine aldehyde (Bet-ald), gamma-aminobutyraldehyde (GAB-ald), acetaldehyde, 4-aminobutylaldehyde (AB-ald), 3-aminopropionaldehyde (AP-ald), 4-N-trimethylaminobutyraldehyde (TMAB-ald) and 3-N-trimethylaminopropionaldehyde (TMAP-ald) as substrates. Catalyzes the oxidation of GAB-ald more efficiently than Bet-ald. Mediates the conversion of GAB-ald into gamma-aminobutyric acid (GABA), and prevents the formation of 2-acetyl-1-pyrroline (2AP) which gives fragrant rice its aromatic properties. This is Betaine aldehyde dehydrogenase 2 (BADH2) from Oryza sativa subsp. indica (Rice).